The primary structure comprises 20 residues: Unknown protein NF009 from 2D-PAGE (20 aa).

Residues A1–P20 form a disordered region.

This chain is Unknown protein NF009 from 2D-PAGE, found in Naegleria fowleri (Brain eating amoeba).